We begin with the raw amino-acid sequence, 670 residues long: Transcriptional regulatory protein DOT6 (670 aa).

Residues 1–44 (MSISTSLNSASIHLSSMDTHPQLHSLTRQPHSSSTAMSKNEAQE) are compositionally biased toward polar residues. The segment at 1–78 (MSISTSLNSA…SKNPSSWDPQ (78 aa)) is disordered. Low complexity predominate over residues 45–74 (SSPSLPASSSSSTSASASASSKNSSKNPSS). Residues 67 to 121 (NSSKNPSSWDPQDDLLLRHLKEVKKMGWKDISQYFPNRTPNACQFRWRRLKSGNL) enclose the HTH myb-type domain. The H-T-H motif DNA-binding region spans 94–117 (WKDISQYFPNRTPNACQFRWRRLK). Basic residues predominate over residues 226 to 242 (HHPHQHLHHHPHHKTLK). Disordered regions lie at residues 226 to 250 (HHPH…SHSF), 293 to 332 (TTPS…NTSR), 406 to 436 (HSSS…CNPT), and 483 to 659 (ADML…NSPL). Ser245 and Ser247 each carry phosphoserine. 2 stretches are compositionally biased toward low complexity: residues 295–307 (PSSP…LLSS) and 316–332 (NWSR…NTSR). Residues 425 to 436 (SGHSMKSSCNPT) are compositionally biased toward polar residues. Ser487 is modified (phosphoserine). Phosphothreonine is present on Thr489. At Ser491 the chain carries Phosphoserine. Over residues 512–522 (DDDKGSDKEDV) the composition is skewed to basic and acidic residues. Composition is skewed to low complexity over residues 544-561 (SSNK…SSKD) and 587-598 (TITSDTSSSAAT). Residues 599–608 (MNRTPNSKNP) are compositionally biased toward polar residues. A compositionally biased stretch (low complexity) spans 622–659 (ITPRPKPSSTTTSITTETTNNMINHSSSTTTTTNNSPL).

It belongs to the DOT6 family. Component of the RPD3C(L) complex composed of at least ASH1, CTI6, DEP1, DOT6, PHO23, RPD3, RXT2, RXT3, SAP30, SDS3, SIN3, TOD6; UME1 and UME6.

It localises to the nucleus. Functionally, component of the RPD3 histone deacetylase complex RPD3C(L) responsible for the deacetylation of lysine residues on the N-terminal part of the core histones (H2A, H2B, H3 and H4). Histone deacetylation gives a tag for epigenetic repression and plays an important role in transcriptional regulation, cell cycle progression and developmental events. DOT6 binds to sequences containing the core CGATG, which resembles the PAC (Polymerase A and C) motif. The polypeptide is Transcriptional regulatory protein DOT6 (DOT6) (Saccharomyces cerevisiae (strain ATCC 204508 / S288c) (Baker's yeast)).